We begin with the raw amino-acid sequence, 262 residues long: Shikimate dehydrogenase (NADP(+)) (262 aa).

Residues 14–16 (SAS) and Thr60 each bind shikimate. Lys64 functions as the Proton acceptor in the catalytic mechanism. Shikimate contacts are provided by Asn85 and Asp100. Residues 121 to 125 (GAGGA), 145 to 150 (NRTAER), and Phe203 contribute to the NADP(+) site. Tyr205 is a binding site for shikimate. Gly227 provides a ligand contact to NADP(+).

It belongs to the shikimate dehydrogenase family. As to quaternary structure, homodimer.

It catalyses the reaction shikimate + NADP(+) = 3-dehydroshikimate + NADPH + H(+). It functions in the pathway metabolic intermediate biosynthesis; chorismate biosynthesis; chorismate from D-erythrose 4-phosphate and phosphoenolpyruvate: step 4/7. Its function is as follows. Involved in the biosynthesis of the chorismate, which leads to the biosynthesis of aromatic amino acids. Catalyzes the reversible NADPH linked reduction of 3-dehydroshikimate (DHSA) to yield shikimate (SA). The protein is Shikimate dehydrogenase (NADP(+)) of Pyrobaculum aerophilum (strain ATCC 51768 / DSM 7523 / JCM 9630 / CIP 104966 / NBRC 100827 / IM2).